We begin with the raw amino-acid sequence, 363 residues long: uncharacterized protein (363 aa).

The N-terminal stretch at 1–20 (MKRAPLITGLLLISTSCAYA) is a signal peptide.

It belongs to the fimbrial protein family.

The protein resides in the fimbrium. Functionally, part of the yraHIJK fimbrial operon. Could contribute to adhesion to various surfaces in specific environmental niches. Increases adhesion to eukaryotic T24 bladder epithelial cells in the absence of fim operon. This is an uncharacterized protein from Escherichia coli (strain K12).